Reading from the N-terminus, the 322-residue chain is Malate dehydrogenase (322 aa).

NAD(+) contacts are provided by residues 10 to 15 (GSGQIG) and D34. Residues R83 and R89 each coordinate substrate. Residues N96 and 119–121 (ITN) each bind NAD(+). 2 residues coordinate substrate: N121 and R152. H176 (proton acceptor) is an active-site residue.

It belongs to the LDH/MDH superfamily. MDH type 3 family.

The catalysed reaction is (S)-malate + NAD(+) = oxaloacetate + NADH + H(+). Functionally, catalyzes the reversible oxidation of malate to oxaloacetate. This is Malate dehydrogenase from Rhodopseudomonas palustris (strain HaA2).